Consider the following 85-residue polypeptide: uncharacterized protein (85 aa).

Transmembrane regions (helical) follow at residues 13 to 35 and 59 to 81; these read KWLA…FQPL and EGIV…HLLL.

It localises to the cell membrane. This is an uncharacterized protein from Archaeoglobus fulgidus (strain ATCC 49558 / DSM 4304 / JCM 9628 / NBRC 100126 / VC-16).